A 966-amino-acid polypeptide reads, in one-letter code: Regulator of telomere elongation helicase 1 homolog (966 aa).

Positions 7–284 constitute a Helicase ATP-binding domain; that stretch reads AGIPVHFPFE…QDMAGDEPKD (278 aa). Residue 42 to 49 coordinates ATP; that stretch reads SPTGTGKT. [4Fe-4S] cluster-binding residues include Cys-146, Cys-164, Cys-173, and Cys-209. A DEAH box motif is present at residues 233–236; sequence DEAH. The segment at 844-864 is disordered; it reads VKIHKRERSSPTAPESTSQVS. Residues 853 to 863 show a composition bias toward polar residues; sequence SPTAPESTSQV. Thr-855 is subject to Phosphothreonine.

It belongs to the helicase family. RAD3/XPD subfamily.

It localises to the nucleus. The catalysed reaction is ATP + H2O = ADP + phosphate + H(+). In terms of biological role, a probable ATP-dependent DNA helicase implicated in DNA repair and the maintenance of genomic stability. Acts as an anti-recombinase to counteract toxic recombination and limit crossover during meiosis. Regulates meiotic recombination and crossover homeostasis by physically dissociating strand invasion events and thereby promotes noncrossover repair by meiotic synthesis dependent strand annealing (SDSA) as well as disassembly of D loop recombination intermediates. The polypeptide is Regulator of telomere elongation helicase 1 homolog (Drosophila sechellia (Fruit fly)).